We begin with the raw amino-acid sequence, 355 residues long: Holliday junction branch migration complex subunit RuvB (355 aa).

The large ATPase domain (RuvB-L) stretch occupies residues 4–190 (TDKLAAERII…FGIVARLEFY (187 aa)). ATP-binding positions include L29, R30, G71, K74, T75, T76, 137–139 (EDY), R180, Y190, and R227. T75 is a Mg(2+) binding site. The small ATPAse domain (RuvB-S) stretch occupies residues 191-261 (DAEQLSRIVR…VADAALAMLD (71 aa)). A head domain (RuvB-H) region spans residues 264 to 355 (PVGFDLMDRK…GSMWNTPDGA (92 aa)). DNA is bound by residues R300, R319, and R324.

The protein belongs to the RuvB family. As to quaternary structure, homohexamer. Forms an RuvA(8)-RuvB(12)-Holliday junction (HJ) complex. HJ DNA is sandwiched between 2 RuvA tetramers; dsDNA enters through RuvA and exits via RuvB. An RuvB hexamer assembles on each DNA strand where it exits the tetramer. Each RuvB hexamer is contacted by two RuvA subunits (via domain III) on 2 adjacent RuvB subunits; this complex drives branch migration. In the full resolvosome a probable DNA-RuvA(4)-RuvB(12)-RuvC(2) complex forms which resolves the HJ.

The protein localises to the cytoplasm. The catalysed reaction is ATP + H2O = ADP + phosphate + H(+). Its function is as follows. The RuvA-RuvB-RuvC complex processes Holliday junction (HJ) DNA during genetic recombination and DNA repair, while the RuvA-RuvB complex plays an important role in the rescue of blocked DNA replication forks via replication fork reversal (RFR). RuvA specifically binds to HJ cruciform DNA, conferring on it an open structure. The RuvB hexamer acts as an ATP-dependent pump, pulling dsDNA into and through the RuvAB complex. RuvB forms 2 homohexamers on either side of HJ DNA bound by 1 or 2 RuvA tetramers; 4 subunits per hexamer contact DNA at a time. Coordinated motions by a converter formed by DNA-disengaged RuvB subunits stimulates ATP hydrolysis and nucleotide exchange. Immobilization of the converter enables RuvB to convert the ATP-contained energy into a lever motion, pulling 2 nucleotides of DNA out of the RuvA tetramer per ATP hydrolyzed, thus driving DNA branch migration. The RuvB motors rotate together with the DNA substrate, which together with the progressing nucleotide cycle form the mechanistic basis for DNA recombination by continuous HJ branch migration. Branch migration allows RuvC to scan DNA until it finds its consensus sequence, where it cleaves and resolves cruciform DNA. The chain is Holliday junction branch migration complex subunit RuvB from Burkholderia vietnamiensis (strain G4 / LMG 22486) (Burkholderia cepacia (strain R1808)).